A 212-amino-acid polypeptide reads, in one-letter code: MNLLIMGLPGAGKGTQAAKIVEKFKVAHISTGDMFRAAMANQTEMGVLAKSYIDKGELVPDEVTNGIVKERLSQEDIKETGFLLDGYPRTIDQAHALDAILKDLGIDLDGVINIEVDPSCLLERLSGRIIHRQTGETFHKVFNPPANYNEEDYYQREDDKPETVKRRLDVNIAQGEPILSHYREQNLVHDIQGNQDINDVFSDIEKVLEKLK.

Position 10-15 (10-15 (GAGKGT)) interacts with ATP. An NMP region spans residues 30–59 (STGDMFRAAMANQTEMGVLAKSYIDKGELV). Residues Thr-31, Arg-36, 57–59 (ELV), 86–89 (GYPR), and Gln-93 contribute to the AMP site. Residues 127 to 159 (GRIIHRQTGETFHKVFNPPANYNEEDYYQREDD) are LID. ATP is bound by residues Arg-128 and 137 to 138 (TF). AMP contacts are provided by Arg-156 and Arg-167. Gln-195 provides a ligand contact to ATP.

The protein belongs to the adenylate kinase family. In terms of assembly, monomer.

The protein resides in the cytoplasm. It carries out the reaction AMP + ATP = 2 ADP. It functions in the pathway purine metabolism; AMP biosynthesis via salvage pathway; AMP from ADP: step 1/1. Functionally, catalyzes the reversible transfer of the terminal phosphate group between ATP and AMP. Plays an important role in cellular energy homeostasis and in adenine nucleotide metabolism. In Streptococcus gordonii (strain Challis / ATCC 35105 / BCRC 15272 / CH1 / DL1 / V288), this protein is Adenylate kinase.